Here is a 1019-residue protein sequence, read N- to C-terminus: Clotting factor C (1019 aa).

The first 25 residues, 1 to 25 (MVLASFLVSGLVLGILAQQMRPVQS), serve as a signal peptide directing secretion. The region spanning 102–137 (YGTWCSGECQCKNGGICDQRTGACTCRDRYEGAHCE) is the EGF-like domain. Disulfide bonds link Cys110-Cys118, Cys112-Cys125, Cys127-Cys136, Cys142-Cys182, Cys168-Cys195, Cys199-Cys241, Cys227-Cys254, Cys260-Cys308, Cys294-Cys321, Cys331-Cys350, Cys354-Cys374, Cys464-Cys564, Cys538-Cys556, Cys576-Cys621, Cys607-Cys634, and Cys720-Cys748. Sushi domains are found at residues 140–197 (KGCP…KCIR), 198–256 (ECAK…QCKK), and 258–323 (VFCP…SCVK). In terms of domain architecture, LCCL spans 325–421 (ADREVDCDSK…EELKSLARSF (97 aa)). Residues 436–568 (CPDGWFEVEE…PSSFACMMDL (133 aa)) form the C-type lectin domain. 2 N-linked (GlcNAc...) asparagine glycosylation sites follow: Asn523 and Asn534. Sushi domains are found at residues 574 to 636 (AKCD…RCIK) and 689 to 750 (PRSS…SCIP). Residues Asn624, Asn740, and Asn767 are each glycosylated (N-linked (GlcNAc...) asparagine). Residues 763–1019 (IWNGNSTEIG…VFLSWIRQFI (257 aa)) enclose the Peptidase S1 domain. A disulfide bond links Cys794 and Cys810. Catalysis depends on charge relay system residues His809 and Asp865. Asn912 carries N-linked (GlcNAc...) asparagine glycosylation. The cysteines at positions 932 and 951 are disulfide-linked. Position 960 (Asp960) interacts with substrate. Cys962 and Cys996 are disulfide-bonded. Ser966 acts as the Charge relay system in catalysis.

Belongs to the peptidase S1 family. In terms of assembly, heterodimer of a light chain and a heavy chain linked by a disulfide bond. Forms a covalent heterodimer with intracellular coagulation inhibitor 1/LICI-1. Forms a covalent heterodimer with intracellular coagulation inhibitor 2/LICI-2. N-glycosylated. In terms of processing, lipopolysaccharide (LPS) activates clotting factor C by inducing the proteolytic cleavage of the clotting factor C light chain into clotting factor C chains A and B. Clotting factor C chains heavy, A and B remain associated via interchain disulfide bonds. As to expression, expressed in hemocytes (at protein level).

The protein resides in the secreted. It catalyses the reaction Selective cleavage of 103-Arg-|-Ser-104 and 124-Ile-|-Ile-125 bonds in Limulus clotting factor B to form activated factor B. Cleavage of -Pro-Arg-|-Xaa- bonds in synthetic substrates.. Activated by Gram-negative bacterial lipopolysaccharides. Inhibited by intracellular coagulation inhibitor 1/LICI-1 and to a lesser extent by intracellular coagulation inhibitors 2/LICI-2 and 3/LICI-3. Inhibited by the small molecule diisopropyl fluorophosphate (DFP). Its function is as follows. This enzyme is closely associated with an endotoxin-sensitive hemolymph coagulation system which may play important roles in both hemostasis and host defense mechanisms. Its active form catalyzes the activation of clotting factor B. This Tachypleus tridentatus (Japanese horseshoe crab) protein is Clotting factor C.